Reading from the N-terminus, the 331-residue chain is Phosphoribosylformylglycinamidine cyclo-ligase (331 aa).

This sequence belongs to the AIR synthase family.

Its subcellular location is the cytoplasm. It carries out the reaction 2-formamido-N(1)-(5-O-phospho-beta-D-ribosyl)acetamidine + ATP = 5-amino-1-(5-phospho-beta-D-ribosyl)imidazole + ADP + phosphate + H(+). Its pathway is purine metabolism; IMP biosynthesis via de novo pathway; 5-amino-1-(5-phospho-D-ribosyl)imidazole from N(2)-formyl-N(1)-(5-phospho-D-ribosyl)glycinamide: step 2/2. This is Phosphoribosylformylglycinamidine cyclo-ligase from Clostridium botulinum (strain Loch Maree / Type A3).